The primary structure comprises 308 residues: Isoflavone reductase homolog (308 aa).

NADP(+) is bound by residues 11–17, arginine 36, and lysine 45; that span reads GGTGYIG. Lysine 133 acts as the Proton acceptor in catalysis. An NADP(+)-binding site is contributed by arginine 137.

Belongs to the NmrA-type oxidoreductase family. Isoflavone reductase subfamily.

The protein localises to the cytoplasm. This Solanum tuberosum (Potato) protein is Isoflavone reductase homolog.